We begin with the raw amino-acid sequence, 490 residues long: Betaine aldehyde dehydrogenase (490 aa).

K(+) is bound at residue D93. 150-152 (GAW) is an NAD(+) binding site. K162 acts as the Charge relay system in catalysis. 176–179 (KPSE) is an NAD(+) binding site. V180 is a K(+) binding site. Residue 230–233 (GIAS) participates in NAD(+) binding. L246 lines the K(+) pocket. The active-site Proton acceptor is E252. G254, C286, and E387 together coordinate NAD(+). The active-site Nucleophile is C286. Residue C286 is modified to Cysteine sulfenic acid (-SOH). Positions 457 and 460 each coordinate K(+). The active-site Charge relay system is E464.

The protein belongs to the aldehyde dehydrogenase family. Dimer of dimers. K(+) serves as cofactor.

It catalyses the reaction betaine aldehyde + NAD(+) + H2O = glycine betaine + NADH + 2 H(+). It participates in amine and polyamine biosynthesis; betaine biosynthesis via choline pathway; betaine from betaine aldehyde: step 1/1. Its function is as follows. Involved in the biosynthesis of the osmoprotectant glycine betaine. Catalyzes the irreversible oxidation of betaine aldehyde to the corresponding acid. The sequence is that of Betaine aldehyde dehydrogenase from Yersinia pseudotuberculosis serotype IB (strain PB1/+).